We begin with the raw amino-acid sequence, 227 residues long: Guanylate kinase (227 aa).

In terms of domain architecture, Guanylate kinase-like spans 21–199 (GNLFMVVAPS…ALAELECIVA (179 aa)). 28-35 (APSGAGKS) serves as a coordination point for ATP.

Belongs to the guanylate kinase family.

The protein localises to the cytoplasm. It carries out the reaction GMP + ATP = GDP + ADP. Essential for recycling GMP and indirectly, cGMP. This chain is Guanylate kinase, found in Burkholderia thailandensis (strain ATCC 700388 / DSM 13276 / CCUG 48851 / CIP 106301 / E264).